We begin with the raw amino-acid sequence, 248 residues long: MDHSIEVTFRVKTQQVIIPEQNIRGNELPLRRWQMELLMLDATGKEVEPTILSKCIYHLHSSFKQPKRRLNSLPFFIKETGWGEFNLKIECFFIGNAGKFSIEHDLTFEDDAYAVDYTVDVPHEFSHLNSELSKYFDLPWKVVSPEEEMSLRIADLPWIKSLALIDEDMMTDVVQMILNDPAVQRAIENHPRREQFFMFITQLPDDLLMKIQAFLKLPNKNSTKQERTNFGSDAIHKDEPVKAHNKLK.

The YEATS domain occupies 1 to 139 (MDHSIEVTFR…SELSKYFDLP (139 aa)). Ser144 carries the phosphoserine modification. Residues 223 to 248 (TKQERTNFGSDAIHKDEPVKAHNKLK) form a disordered region.

In terms of assembly, component of the SAS complex, at least composed of SAS2, SAS4 and SAS5. These three proteins constitute the core of the complex, and are sufficient to acetylate histones.

Its subcellular location is the nucleus. Its function is as follows. Component of the SAS complex, a multiprotein complex that acetylates 'Lys-16' of histone H4 and 'Lys-14' of histone H3. The SAS complex is however unable to acetylate nucleosomal histones. The complex is involved in transcriptional silencing at telomeres and at HML locus. Also involved in rDNA silencing. In the complex, SAS5 is required for maximal histone acetyltransferase (HAT) activity of the complex, suggesting that it may be required to stabilize the complex or help in substrate recognition. This is Something about silencing protein 5 (SAS5) from Saccharomyces cerevisiae (strain ATCC 204508 / S288c) (Baker's yeast).